The chain runs to 171 residues: Orange carotenoid-binding domain-containing protein (171 aa).

An OCP N-terminal domain is found at 21–171 (GDAVASTITV…ADMGVDPLAD (151 aa)).

This sequence belongs to the orange carotenoid-binding protein family. 3'-hydroxyechinenone is required as a cofactor.

It is found in the cellular thylakoid membrane. In terms of biological role, might act as a photo-protectant, protecting against damage induced by excess light via a process known as non-photochemical quenching (NPQ). The chain is Orange carotenoid-binding domain-containing protein from Nostoc sp. (strain PCC 7120 / SAG 25.82 / UTEX 2576).